The primary structure comprises 261 residues: Carbonic anhydrase 1 (261 aa).

Residue A2 is modified to N-acetylalanine. The region spanning 4–261 (PDWGYDGENG…LKGRTVKASF (258 aa)) is the Alpha-carbonic anhydrase domain. The segment at 22–41 (PIANGNNQSPIDIKTSETKR) is disordered. H65 acts as the Proton donor/acceptor in catalysis. Zn(2+)-binding residues include H95, H97, and H120. Substrate is bound by residues T200 and 200-201 (TH).

This sequence belongs to the alpha-carbonic anhydrase family. Requires Zn(2+) as cofactor.

It is found in the cytoplasm. The enzyme catalyses hydrogencarbonate + H(+) = CO2 + H2O. It catalyses the reaction urea = cyanamide + H2O. Inhibited by acetazolamide. In terms of biological role, catalyzes the reversible hydration of carbon dioxide. Can hydrate cyanamide to urea. The chain is Carbonic anhydrase 1 (CA1) from Ovis aries (Sheep).